A 249-amino-acid polypeptide reads, in one-letter code: MAGHSQFKNIMHRKGAQDAKRAKQFAKVLREITVATRSGLPDPTSNPRLRAAISMAREVNMPKDNVERAIKKASGAAGGDDYVEVRYEGYGPAGVAIIVEGLTDNRNRTAGEVRAAFSKHGGSLGETNSVSFMFQRLGVISYPLDVASEDEMLEAAIEAGADNAETTEEGHEVTCAMENFFAVRDALESRFGEPQSAKLDWRPENSVTLDEDKARSVMKLIDVLEDSDDIQAVYANFDIPDDVAEALAA.

It belongs to the TACO1 family.

It localises to the cytoplasm. The sequence is that of Probable transcriptional regulatory protein GOX1679 from Gluconobacter oxydans (strain 621H) (Gluconobacter suboxydans).